Consider the following 248-residue polypeptide: MSVLPCSINTLKGIYDLSGVEVGQHFYWQIGGFQVHAQVLITSWVVIAILLGSATIVVRNPQTIPTDGQNFFEYVLEFIRDLTKTQIGEEEYGPWVPFIGTMFLFIFVSNWSGALLPRKIIELPQGELAAPTNDINTTVALALPTSVAYFYAGISKKGLGYFGKYIQPTPILLPINILEDFTKPLSLSFRLFGNILADELVVVVLVSLVPSLVPIPVMFLGLFTSGIQALIFATLAAAYIGESMEGHH.

The next 5 helical transmembrane spans lie at 38–58 (QVLI…TIVV), 96–116 (VPFI…GALL), 135–155 (INTT…AGIS), 200–220 (LVVV…VMFL), and 221–241 (GLFT…AYIG).

The protein belongs to the ATPase A chain family. F-type ATPases have 2 components, CF(1) - the catalytic core - and CF(0) - the membrane proton channel. CF(1) has five subunits: alpha(3), beta(3), gamma(1), delta(1), epsilon(1). CF(0) has four main subunits: a, b, b' and c.

Its subcellular location is the plastid. The protein localises to the chloroplast thylakoid membrane. Key component of the proton channel; it plays a direct role in the translocation of protons across the membrane. The protein is ATP synthase subunit a, chloroplastic of Amborella trichopoda.